A 221-amino-acid chain; its full sequence is Protein-L-isoaspartate O-methyltransferase (221 aa).

Ser64 is a catalytic residue.

This sequence belongs to the methyltransferase superfamily. L-isoaspartyl/D-aspartyl protein methyltransferase family.

Its subcellular location is the cytoplasm. It carries out the reaction [protein]-L-isoaspartate + S-adenosyl-L-methionine = [protein]-L-isoaspartate alpha-methyl ester + S-adenosyl-L-homocysteine. In terms of biological role, catalyzes the methyl esterification of L-isoaspartyl residues in peptides and proteins that result from spontaneous decomposition of normal L-aspartyl and L-asparaginyl residues. It plays a role in the repair and/or degradation of damaged proteins. The protein is Protein-L-isoaspartate O-methyltransferase of Thermococcus sibiricus (strain DSM 12597 / MM 739).